The chain runs to 560 residues: Clathrin interactor EPSIN 1 (560 aa).

In terms of domain architecture, ENTH spans 20–152; sequence LKVLKVPEME…NNKEKISEIR (133 aa). Positions 190 to 288 are disordered; that stretch reads NFDSYKDRDS…KPSTGSANQV (99 aa). Positions 193-220 are enriched in basic and acidic residues; the sequence is SYKDRDSREDKNDYESFQKSRRGVKTEE. Residues 221–233 show a composition bias toward polar residues; the sequence is QSYTSKKSFSRYG. A compositionally biased stretch (basic and acidic residues) spans 234–251; that stretch reads STDHDNLSSGKKSPDSAK. Polar residues predominate over residues 274–287; sequence GTSSNKPSTGSANQ. The Clathrin binding signature appears at 296–300; the sequence is IGDFL. An ALPHA-ADR binding motif is present at residues 320 to 322; sequence DLF. The segment covering 414 to 439 has biased composition (polar residues); the sequence is SHSASVSTGPQAPSVHGSATNTTSPL. 2 disordered regions span residues 414–453 and 517–560; these read SHSA…QKKD and LGKT…GFKQ. Low complexity predominate over residues 526-536; it reads QQQQQQQQQQQ. Residues 544 to 554 show a composition bias toward polar residues; the sequence is FFSSLSNQRYQ.

The protein belongs to the epsin family. Interacts with clathrin, VTI11, GAMMA-ADR and VSR1. Binds to the deubiquitinating enzyme AMSH3. In terms of tissue distribution, mostly expressed in cotyledons and flowers, and, to a lower extent, in roots, leaves and siliques (at protein level).

It localises to the golgi apparatus. It is found in the prevacuolar compartment. Its subcellular location is the cytoplasm. The protein localises to the cytoplasmic vesicle. The protein resides in the clathrin-coated vesicle. It localises to the cytoskeleton. In terms of biological role, may have a role in transport via clathrin-coated vesicles from the trans-Golgi network to endosomes. Stimulates clathrin assembly. Does not seem to bind to phospholipids. Plays an important role in the vacuolar trafficking of soluble cargo proteins at the trans-Golgi network. This chain is Clathrin interactor EPSIN 1 (EPSIN1), found in Arabidopsis thaliana (Mouse-ear cress).